We begin with the raw amino-acid sequence, 419 residues long: MAVCAGRLKCFGNPAVSLRTAASRAYATTTSPDPAIPSSSSASSSSALPKRPQTSFRDKLNAGPSFSDFLSGGNRDDARILDPNEAYALKTALVGPKGKKKEITRLPSWLKTSIPDSNNYKRIKNDLRGLGLHTVCEEARCPNISECWGGSSKSAATATIMLMGDTCTRACRFCSVKTSKTPPPLDPHEPENTAEALSRWGLGYVVLTTVDRDDLIDGGARHFAETVIRIKQKAPNILVECLTGDYAGDLEMVALMAKSGLDVYAHNVETVEALTPHVRDRRANFQTSLRVLKAAKAAVPSLITKTSMMLGLGETEEQMWDALRQLRAANVDVVTFGQYMRPTKRHMPVHEYVRPDVFELWKDRALEMGFLYCASGPLVRSSYKAGEAFIENVLKKRRAESTGPESTNVPNVTPDAIVR.

The transit peptide at 1–26 (MAVCAGRLKCFGNPAVSLRTAASRAY) directs the protein to the mitochondrion. A compositionally biased stretch (low complexity) spans 28-47 (TTTSPDPAIPSSSSASSSSA). Positions 28 to 61 (TTTSPDPAIPSSSSASSSSALPKRPQTSFRDKLN) are disordered. [4Fe-4S] cluster-binding residues include C136, C141, C147, C167, C171, C174, and S382. Residues 150 to 371 (GSSKSAATAT…KDRALEMGFL (222 aa)) form the Radical SAM core domain. Residues 399 to 419 (AESTGPESTNVPNVTPDAIVR) are disordered.

It belongs to the radical SAM superfamily. Lipoyl synthase family. [4Fe-4S] cluster serves as cofactor.

The protein resides in the mitochondrion. The enzyme catalyses [[Fe-S] cluster scaffold protein carrying a second [4Fe-4S](2+) cluster] + N(6)-octanoyl-L-lysyl-[protein] + 2 oxidized [2Fe-2S]-[ferredoxin] + 2 S-adenosyl-L-methionine + 4 H(+) = [[Fe-S] cluster scaffold protein] + N(6)-[(R)-dihydrolipoyl]-L-lysyl-[protein] + 4 Fe(3+) + 2 hydrogen sulfide + 2 5'-deoxyadenosine + 2 L-methionine + 2 reduced [2Fe-2S]-[ferredoxin]. It participates in protein modification; protein lipoylation via endogenous pathway; protein N(6)-(lipoyl)lysine from octanoyl-[acyl-carrier-protein]: step 2/2. Catalyzes the radical-mediated insertion of two sulfur atoms into the C-6 and C-8 positions of the octanoyl moiety bound to the lipoyl domains of lipoate-dependent enzymes, thereby converting the octanoylated domains into lipoylated derivatives. The sequence is that of Lipoyl synthase, mitochondrial from Coccidioides posadasii (strain C735) (Valley fever fungus).